Here is a 378-residue protein sequence, read N- to C-terminus: Chaperone protein DnaJ 2 (378 aa).

Residues 4 to 68 (DYYAVLGVRR…QKKQVYDLGG (65 aa)) form the J domain. Residues 130-212 (GTTKDIQVET…CAGDGRVRSR (83 aa)) form a CR-type zinc finger. C143, C146, C160, C163, C186, C189, C200, and C203 together coordinate Zn(2+). CXXCXGXG motif repeat units follow at residues 143–150 (CTTCSGEG), 160–167 (CDMCRGRG), 186–193 (CPQCQGFG), and 200–207 (CPECAGDG). The disordered stretch occupies residues 351 to 378 (RGEERPTGQFQPGQQGLFSRLKDAFNGR). Positions 358 to 367 (GQFQPGQQGL) are enriched in polar residues.

This sequence belongs to the DnaJ family. Homodimer. The cofactor is Zn(2+).

It localises to the cytoplasm. Its function is as follows. Participates actively in the response to hyperosmotic and heat shock by preventing the aggregation of stress-denatured proteins and by disaggregating proteins, also in an autonomous, DnaK-independent fashion. Unfolded proteins bind initially to DnaJ; upon interaction with the DnaJ-bound protein, DnaK hydrolyzes its bound ATP, resulting in the formation of a stable complex. GrpE releases ADP from DnaK; ATP binding to DnaK triggers the release of the substrate protein, thus completing the reaction cycle. Several rounds of ATP-dependent interactions between DnaJ, DnaK and GrpE are required for fully efficient folding. Also involved, together with DnaK and GrpE, in the DNA replication of plasmids through activation of initiation proteins. The chain is Chaperone protein DnaJ 2 from Streptomyces avermitilis (strain ATCC 31267 / DSM 46492 / JCM 5070 / NBRC 14893 / NCIMB 12804 / NRRL 8165 / MA-4680).